We begin with the raw amino-acid sequence, 385 residues long: 8-amino-7-oxononanoate synthase (385 aa).

Residue Arg-21 participates in substrate binding. 108–109 (GF) contacts pyridoxal 5'-phosphate. Substrate is bound at residue His-133. Pyridoxal 5'-phosphate-binding residues include Ser-179, His-207, and Thr-233. Lys-236 is subject to N6-(pyridoxal phosphate)lysine. Thr-352 is a binding site for substrate.

Belongs to the class-II pyridoxal-phosphate-dependent aminotransferase family. BioF subfamily. Homodimer. It depends on pyridoxal 5'-phosphate as a cofactor.

The enzyme catalyses 6-carboxyhexanoyl-[ACP] + L-alanine + H(+) = (8S)-8-amino-7-oxononanoate + holo-[ACP] + CO2. The protein operates within cofactor biosynthesis; biotin biosynthesis. In terms of biological role, catalyzes the decarboxylative condensation of pimeloyl-[acyl-carrier protein] and L-alanine to produce 8-amino-7-oxononanoate (AON), [acyl-carrier protein], and carbon dioxide. In Salmonella paratyphi A (strain ATCC 9150 / SARB42), this protein is 8-amino-7-oxononanoate synthase.